A 107-amino-acid polypeptide reads, in one-letter code: Probable 4-amino-4-deoxy-L-arabinose-phosphoundecaprenol flippase subunit ArnE (107 aa).

The EamA domain maps to 31 to 105 (RVWGWLALSL…IIVGIILLGG (75 aa)). A run of 3 helical transmembrane segments spans residues 34 to 54 (GWLA…LFVL), 57 to 77 (VPVS…TLAA), and 85 to 105 (IALR…LLGG).

Belongs to the ArnE family. Heterodimer of ArnE and ArnF.

The protein localises to the cell inner membrane. Its pathway is bacterial outer membrane biogenesis; lipopolysaccharide biosynthesis. In terms of biological role, translocates 4-amino-4-deoxy-L-arabinose-phosphoundecaprenol (alpha-L-Ara4N-phosphoundecaprenol) from the cytoplasmic to the periplasmic side of the inner membrane. The polypeptide is Probable 4-amino-4-deoxy-L-arabinose-phosphoundecaprenol flippase subunit ArnE (Enterobacter sp. (strain 638)).